We begin with the raw amino-acid sequence, 79 residues long: Tau-theraphotoxin-Hs1a (79 aa).

6 disulfide bridges follow: cysteine 2–cysteine 16, cysteine 9–cysteine 23, cysteine 15–cysteine 31, cysteine 44–cysteine 58, cysteine 51–cysteine 63, and cysteine 57–cysteine 71. Domain repeat units follow at residues 2-31 (CAKE…IPHC) and 42-71 (TNCA…IPYC). Positions 2–71 (CAKEGEVCSW…DCPLAFIPYC (70 aa)) are 2 X approximate repeats with cysteine pattern C-C-CC-C-C.

Belongs to the neurotoxin 23 family. Double-knot toxin subfamily. In terms of assembly, interacts with TRPV1 (2 toxins (4 moieties) bind 1 channel (homotetramer)). In terms of tissue distribution, expressed by the venom gland.

It is found in the secreted. Selectively activates the heat-activated TRPV1 channel. It binds to TRPV1 in an open state-dependent manner, trapping it there to produce irreversible currents. It binds to the outer edge of the external pore of TRPV1 in a counterclockwise configuration, using a limited protein-protein interface and inserting hydrophobic residues into the bilayer. It also partitions naturally into membranes, with the two lobes exhibiting opposing energetics for membrane partitioning (K1) and channel activation (K2). In addition, the toxin disrupts a cluster of hydrophobic residues behind the selectivity filter that are critical for channel activation. This is Tau-theraphotoxin-Hs1a from Cyriopagopus schmidti (Chinese bird spider).